The sequence spans 132 residues: Large ribosomal subunit protein bL12 (132 aa).

Belongs to the bacterial ribosomal protein bL12 family. As to quaternary structure, homodimer. Part of the ribosomal stalk of the 50S ribosomal subunit. Forms a multimeric L10(L12)X complex, where L10 forms an elongated spine to which 2 to 4 L12 dimers bind in a sequential fashion. Binds GTP-bound translation factors.

In terms of biological role, forms part of the ribosomal stalk which helps the ribosome interact with GTP-bound translation factors. Is thus essential for accurate translation. This chain is Large ribosomal subunit protein bL12, found in Prochlorococcus marinus (strain MIT 9211).